A 232-amino-acid chain; its full sequence is N-acetyltransferase 8B (232 aa).

Residues 1–62 (MPRFEAQKSS…FLLLLGVPLA (62 aa)) lie on the Cytoplasmic side of the membrane. The helical; Signal-anchor for type II membrane protein transmembrane segment at 63–83 (LVLVSGSWILAVICIFFLLLL) threads the bilayer. The N-acetyltransferase domain occupies 79 to 224 (FLLLLLRLLA…WRLVDICFIQ (146 aa)). At 84–232 (LRLLARQPWK…IQLNYSFPSA (149 aa)) the chain is on the lumenal side. K109 is modified (N6-acetyllysine).

Belongs to the NAT8 family. Post-translationally, acetylation on Lys-109 modulates enzymatic activity. As to expression, expressed in brain (at protein level).

The protein localises to the endoplasmic reticulum-Golgi intermediate compartment membrane. The protein resides in the endoplasmic reticulum membrane. The catalysed reaction is L-lysyl-[protein] + acetyl-CoA = N(6)-acetyl-L-lysyl-[protein] + CoA + H(+). Endoplasmic reticulum (ER)-membrane-bound lysine N-acetyltransferase catalyzing the N6-acetylation of lysine residues in the lumen of the ER in various proteins, including PROM1 and BACE1, using acetyl-CoA as acetyl donor. Thereby, may regulate apoptosis through the acetylation and the regulation of the expression of PROM1. Acetylates and stabilizes BACE1 immature protein, leading to increased steady-state levels in neurons. By acting on BACE1 expression, may regulate amyloid beta-peptide formation. N(6)-lysine acetylation in ER maintains protein homeostasis and regulates reticulophagy. The chain is N-acetyltransferase 8B from Mus musculus (Mouse).